The following is a 457-amino-acid chain: UDP-glucosyltransferase 45 (457 aa).

The Proton acceptor role is filled by histidine 21. Histidine 21 contributes to the an anthocyanidin binding site. Aspartate 112 (charge relay) is an active-site residue. Residues threonine 134, glutamine 336, histidine 351, tryptophan 354, asparagine 355, serine 356, glutamate 359, aspartate 375, and glutamine 376 each contribute to the UDP-alpha-D-glucose site.

This sequence belongs to the UDP-glycosyltransferase family.

The enzyme catalyses (20S)-protopanaxadiol + UDP-alpha-D-glucose = (20S)-ginsenoside Rh2 + UDP + H(+). Its pathway is secondary metabolite biosynthesis; terpenoid biosynthesis. Component of the triterpene saponins (e.g. PPD-type ginsenosides) biosynthetic pathway. Glycosyltransferase that catalyzes the biosynthesis of ginsenoside Rh2 from protopanaxadiol (PPD). The chain is UDP-glucosyltransferase 45 from Panax ginseng (Korean ginseng).